Consider the following 400-residue polypeptide: Protection of telomeres homolog 1 (400 aa).

It belongs to the telombin family. In terms of tissue distribution, expressed in sperm and oocytes.

Its subcellular location is the nucleus. It localises to the nucleus envelope. It is found in the chromosome. The protein localises to the telomere. Functionally, telomeric DNA-binding protein, which binds to single-stranded C-rich repeat sequences, with high specificity to the 5'-GCCTAA-3' sequence. Repeat sequence binding can be at the 5' or 3' telomeric end. May have a role in protecting the 5' end of the C-rich strand of the telomere. Acts redundantly with pot-2 to negatively regulate telomerase-mediated telomere extension. Also regulates telomere length by the telomerase-independent telomere maintenance pathway called ALT (alternative lengthening of telomeres). Through sun-1, anchors telomeres to the nuclear envelope in embryos. This Caenorhabditis elegans protein is Protection of telomeres homolog 1.